The sequence spans 264 residues: LIMR family protein SELMODRAFT_416716 (264 aa).

4 helical membrane-spanning segments follow: residues 23–43 (VVIL…VIGY), 96–116 (ILFT…LIFA), 194–214 (IIWL…FPFL), and 225–245 (WGLL…MSVI).

This sequence belongs to the LIMR family.

Its subcellular location is the membrane. This chain is LIMR family protein SELMODRAFT_416716, found in Selaginella moellendorffii (Spikemoss).